A 335-amino-acid polypeptide reads, in one-letter code: Biotin synthase (335 aa).

The 229-residue stretch at 46–274 (YDIQLASLFS…ESKIRLSAGR (229 aa)) folds into the Radical SAM core domain. Residues cysteine 61, cysteine 65, and cysteine 68 each contribute to the [4Fe-4S] cluster site. The [2Fe-2S] cluster site is built by cysteine 105, cysteine 137, cysteine 197, and arginine 269.

Belongs to the radical SAM superfamily. Biotin synthase family. Homodimer. The cofactor is [4Fe-4S] cluster. [2Fe-2S] cluster is required as a cofactor.

The enzyme catalyses (4R,5S)-dethiobiotin + (sulfur carrier)-SH + 2 reduced [2Fe-2S]-[ferredoxin] + 2 S-adenosyl-L-methionine = (sulfur carrier)-H + biotin + 2 5'-deoxyadenosine + 2 L-methionine + 2 oxidized [2Fe-2S]-[ferredoxin]. Its pathway is cofactor biosynthesis; biotin biosynthesis; biotin from 7,8-diaminononanoate: step 2/2. Catalyzes the conversion of dethiobiotin (DTB) to biotin by the insertion of a sulfur atom into dethiobiotin via a radical-based mechanism. This is Biotin synthase from Prochlorococcus marinus (strain MIT 9301).